Here is a 122-residue protein sequence, read N- to C-terminus: Large ribosomal subunit protein uL14 (122 aa).

Belongs to the universal ribosomal protein uL14 family. As to quaternary structure, part of the 50S ribosomal subunit. Forms a cluster with proteins L3 and L19. In the 70S ribosome, L14 and L19 interact and together make contacts with the 16S rRNA in bridges B5 and B8.

Functionally, binds to 23S rRNA. Forms part of two intersubunit bridges in the 70S ribosome. This chain is Large ribosomal subunit protein uL14, found in Bartonella bacilliformis (strain ATCC 35685 / KC583 / Herrer 020/F12,63).